A 317-amino-acid chain; its full sequence is Acetyl-coenzyme A carboxylase carboxyl transferase subunit alpha (317 aa).

One can recognise a CoA carboxyltransferase C-terminal domain in the interval 40 to 293; it reads LEGRVRDAMV…ETVIGDALKE (254 aa).

The protein belongs to the AccA family. As to quaternary structure, acetyl-CoA carboxylase is a heterohexamer composed of biotin carboxyl carrier protein (AccB), biotin carboxylase (AccC) and two subunits each of ACCase subunit alpha (AccA) and ACCase subunit beta (AccD).

It localises to the cytoplasm. The enzyme catalyses N(6)-carboxybiotinyl-L-lysyl-[protein] + acetyl-CoA = N(6)-biotinyl-L-lysyl-[protein] + malonyl-CoA. It participates in lipid metabolism; malonyl-CoA biosynthesis; malonyl-CoA from acetyl-CoA: step 1/1. Component of the acetyl coenzyme A carboxylase (ACC) complex. First, biotin carboxylase catalyzes the carboxylation of biotin on its carrier protein (BCCP) and then the CO(2) group is transferred by the carboxyltransferase to acetyl-CoA to form malonyl-CoA. The sequence is that of Acetyl-coenzyme A carboxylase carboxyl transferase subunit alpha from Rhizobium meliloti (strain 1021) (Ensifer meliloti).